Here is a 157-residue protein sequence, read N- to C-terminus: Protein Smg homolog (157 aa).

This sequence belongs to the Smg family.

The chain is Protein Smg homolog from Aeromonas hydrophila subsp. hydrophila (strain ATCC 7966 / DSM 30187 / BCRC 13018 / CCUG 14551 / JCM 1027 / KCTC 2358 / NCIMB 9240 / NCTC 8049).